The primary structure comprises 133 residues: Small ribosomal subunit protein uS8 (133 aa).

The protein belongs to the universal ribosomal protein uS8 family. In terms of assembly, part of the 30S ribosomal subunit. Contacts proteins S5 and S12.

One of the primary rRNA binding proteins, it binds directly to 16S rRNA central domain where it helps coordinate assembly of the platform of the 30S subunit. In Orientia tsutsugamushi (strain Ikeda) (Rickettsia tsutsugamushi), this protein is Small ribosomal subunit protein uS8.